The primary structure comprises 188 residues: Adenine phosphoribosyltransferase (188 aa).

Belongs to the purine/pyrimidine phosphoribosyltransferase family. In terms of assembly, homodimer.

The protein resides in the cytoplasm. It carries out the reaction AMP + diphosphate = 5-phospho-alpha-D-ribose 1-diphosphate + adenine. Its pathway is purine metabolism; AMP biosynthesis via salvage pathway; AMP from adenine: step 1/1. In terms of biological role, catalyzes a salvage reaction resulting in the formation of AMP, that is energically less costly than de novo synthesis. The protein is Adenine phosphoribosyltransferase of Burkholderia ambifaria (strain MC40-6).